Reading from the N-terminus, the 115-residue chain is NADH-ubiquinone oxidoreductase chain 3 (115 aa).

Helical transmembrane passes span 4 to 24, 55 to 75, and 86 to 106; these read MLIL…AFWL, FFLV…LLPL, and MLMT…AYEW.

Belongs to the complex I subunit 3 family. In terms of assembly, core subunit of respiratory chain NADH dehydrogenase (Complex I) which is composed of 45 different subunits. Interacts with TMEM186. Interacts with TMEM242.

The protein resides in the mitochondrion inner membrane. The enzyme catalyses a ubiquinone + NADH + 5 H(+)(in) = a ubiquinol + NAD(+) + 4 H(+)(out). Functionally, core subunit of the mitochondrial membrane respiratory chain NADH dehydrogenase (Complex I) which catalyzes electron transfer from NADH through the respiratory chain, using ubiquinone as an electron acceptor. Essential for the catalytic activity of complex I. This is NADH-ubiquinone oxidoreductase chain 3 from Microtus pennsylvanicus (Meadow vole).